Reading from the N-terminus, the 362-residue chain is GMP reductase (362 aa).

Residues 26–27, lysine 78, 129–131, and 180–181 each bind NADP(+); these read SR, DVA, and IG. K(+)-binding residues include glycine 181, glycine 183, and cysteine 186. Cysteine 186 acts as the Thioimidate intermediate in catalysis. Residue threonine 188 is the Proton donor/acceptor of the active site. Residue arginine 189 coordinates K(+). GMP is bound by residues 219-221, 242-243, 268-270, and 286-290; these read DGG, GG, GMS, and RASEG. NADP(+) is bound by residues methionine 269, 285–286, and 314–317; these read YR and STCT.

This sequence belongs to the IMPDH/GMPR family.

It catalyses the reaction IMP + NH4(+) + NADP(+) = GMP + NADPH + 2 H(+). Its function is as follows. Catalyzes the irreversible NADPH-dependent deamination of GMP to IMP. It functions in the conversion of nucleobase, nucleoside and nucleotide derivatives of G to A nucleotides, and in maintaining the intracellular balance of A and G nucleotides. The protein is GMP reductase of Phytophthora infestans (Potato late blight agent).